A 216-amino-acid polypeptide reads, in one-letter code: Cytidylate kinase (216 aa).

7 to 15 is a binding site for ATP; sequence GPSGTGKST.

This sequence belongs to the cytidylate kinase family. Type 1 subfamily.

It is found in the cytoplasm. It carries out the reaction CMP + ATP = CDP + ADP. The catalysed reaction is dCMP + ATP = dCDP + ADP. The protein is Cytidylate kinase of Chlamydia caviae (strain ATCC VR-813 / DSM 19441 / 03DC25 / GPIC) (Chlamydophila caviae).